Here is a 587-residue protein sequence, read N- to C-terminus: Aspartate--tRNA ligase (587 aa).

Glu174 is an L-aspartate binding site. An aspartate region spans residues 198–201; sequence QITK. Arg220 provides a ligand contact to L-aspartate. ATP is bound by residues 220–222 and Gln229; that span reads RDE. An L-aspartate-binding site is contributed by His443. Glu477 lines the ATP pocket. Arg484 is an L-aspartate binding site. Residue 529 to 532 coordinates ATP; the sequence is GLDR.

Belongs to the class-II aminoacyl-tRNA synthetase family. Type 1 subfamily. Homodimer.

Its subcellular location is the cytoplasm. The catalysed reaction is tRNA(Asp) + L-aspartate + ATP = L-aspartyl-tRNA(Asp) + AMP + diphosphate. Its function is as follows. Catalyzes the attachment of L-aspartate to tRNA(Asp) in a two-step reaction: L-aspartate is first activated by ATP to form Asp-AMP and then transferred to the acceptor end of tRNA(Asp). This is Aspartate--tRNA ligase from Streptococcus pneumoniae serotype 4 (strain ATCC BAA-334 / TIGR4).